Reading from the N-terminus, the 703-residue chain is Probable boron transporter 2 (703 aa).

The Cytoplasmic portion of the chain corresponds to 1–35 (MEETFVPFEGIKNDLKGRLMCYKQDWTGGIKAGFR). The chain crosses the membrane as a helical span at residues 36-56 (ILAPTTYIFFASAIPVISFGE). Topologically, residues 57-75 (QLERSTDGVLTAVQTLAST) are extracellular. Residues 76 to 96 (AICGIIHSIIGGQPLLILGVA) traverse the membrane as a helical segment. Over 97 to 120 (EPTVIMYTFMFNFAKGRPELGRNL) the chain is Cytoplasmic. Residues 121–141 (FLAWSGWVCVWTSLILFVLAI) form a helical membrane-spanning segment. Over 142–155 (CGACSFINRFTRVA) the chain is Extracellular. The helical transmembrane segment at 156 to 176 (GELFGLLIAMLFMQQAIKGLV) threads the bilayer. At 177 to 195 (DEFRAPAREDLKLVEFLPS) the chain is on the cytoplasmic side. The helical transmembrane segment at 196-216 (WRFANGMFALVLSFGLLITAL) threads the bilayer. Over 217–233 (RSRKARSWRYGTGWLRS) the chain is Extracellular. A helical membrane pass occupies residues 234 to 254 (LVADYGVPLMVLVWTGVSYIP). Topologically, residues 255–289 (TGDVPKGIPRRLFSPNPWSPGAYENWTVVKEMLQV) are cytoplasmic. Residues 290–310 (PIVYIIGAFIPATMIAVLYYF) form a helical membrane-spanning segment. Over 311–337 (DHSVASQLAQQKEFNLRKPSSYHYDLL) the chain is Extracellular. The chain crosses the membrane as a helical span at residues 338–358 (LLGFLTLMCGLLGIPPSNGVI). Residues 359–480 (PQSPMHTKSL…AVMVGGCVAA (122 aa)) are Cytoplasmic-facing. The chain crosses the membrane as a helical span at residues 481-501 (MPLLKMIPTSVLWGYFAFMAI). At 502–557 (ESLPGNQFWERILLLFTAPSRRFKVLEDNHATFVETVPFKTIAMFTIFQTTYLLTC) the chain is on the extracellular side. The chain crosses the membrane as a helical span at residues 558–578 (FGLTWIPIAGVMFPLLIMFLI). Residues 579–703 (PVRQYILPRF…SPLNPSSSSK (125 aa)) are Cytoplasmic-facing. Positions 678-703 (EMSPRLSGKGQNSPKPSPLNPSSSSK) are disordered.

The protein belongs to the anion exchanger (TC 2.A.31.3) family.

The protein resides in the membrane. Its function is as follows. Probable boron transporter. Boron is essential for maintaining the integrity of plants cell walls. This Arabidopsis thaliana (Mouse-ear cress) protein is Probable boron transporter 2 (BOR2).